Here is a 739-residue protein sequence, read N- to C-terminus: Poly(A) polymerase gamma (739 aa).

Lysine 2 bears the N6-acetyllysine mark. The residue at position 23 (serine 23) is a Phosphoserine. Residues 99-101, threonine 108, 112-114, aspartate 166, lysine 227, tyrosine 236, and 245-246 each bind ATP; these read FGS, DID, and GV. Aspartate 112, aspartate 114, and aspartate 166 together coordinate Mg(2+). The disordered stretch occupies residues 506-566; the sequence is KSLSDVSRSS…PTGEIERSSA (61 aa). Composition is skewed to polar residues over residues 509–531 and 538–556; these read SDVS…TCLD and SGTP…NPDS. Serine 524 carries the phosphoserine modification. 2 positions are modified to phosphoserine: serine 602 and serine 651. The residue at position 657 (threonine 657) is a Phosphothreonine. Residues 677-688 are compositionally biased toward basic and acidic residues; the sequence is SRAAEDRKRKPM. A disordered region spans residues 677–725; it reads SRAAEDRKRKPMDSIGGESMPIPTIDTARKKRLPSKELPDSSSPVPANN. A Phosphoserine modification is found at serine 711.

The protein belongs to the poly(A) polymerase family. Mg(2+) is required as a cofactor. It depends on Mn(2+) as a cofactor.

It localises to the nucleus. It carries out the reaction RNA(n) + ATP = RNA(n)-3'-adenine ribonucleotide + diphosphate. In terms of biological role, responsible for the post-transcriptional adenylation of the 3'-terminal of mRNA precursors and several small RNAs including signal recognition particle (SRP) RNA, nuclear 7SK RNA, U2 small nuclear RNA, and ribosomal 5S RNA. The protein is Poly(A) polymerase gamma (Papolg) of Mus musculus (Mouse).